A 118-amino-acid polypeptide reads, in one-letter code: Large ribosomal subunit protein uL22 (118 aa).

This sequence belongs to the universal ribosomal protein uL22 family. In terms of assembly, part of the 50S ribosomal subunit.

Its function is as follows. This protein binds specifically to 23S rRNA; its binding is stimulated by other ribosomal proteins, e.g. L4, L17, and L20. It is important during the early stages of 50S assembly. It makes multiple contacts with different domains of the 23S rRNA in the assembled 50S subunit and ribosome. The globular domain of the protein is located near the polypeptide exit tunnel on the outside of the subunit, while an extended beta-hairpin is found that lines the wall of the exit tunnel in the center of the 70S ribosome. The polypeptide is Large ribosomal subunit protein uL22 (Listeria innocua serovar 6a (strain ATCC BAA-680 / CLIP 11262)).